A 94-amino-acid polypeptide reads, in one-letter code: Phosphoribosyl-ATP pyrophosphatase (94 aa).

Belongs to the PRA-PH family.

The protein resides in the cytoplasm. It carries out the reaction 1-(5-phospho-beta-D-ribosyl)-ATP + H2O = 1-(5-phospho-beta-D-ribosyl)-5'-AMP + diphosphate + H(+). The protein operates within amino-acid biosynthesis; L-histidine biosynthesis; L-histidine from 5-phospho-alpha-D-ribose 1-diphosphate: step 2/9. This Saccharolobus islandicus (strain M.16.27) (Sulfolobus islandicus) protein is Phosphoribosyl-ATP pyrophosphatase.